Here is a 37-residue protein sequence, read N- to C-terminus: Large ribosomal subunit protein bL36c (37 aa).

This sequence belongs to the bacterial ribosomal protein bL36 family.

It is found in the plastid. The protein localises to the chloroplast. This Chaetosphaeridium globosum (Charophycean green alga) protein is Large ribosomal subunit protein bL36c.